We begin with the raw amino-acid sequence, 116 residues long: Protein Rev (116 aa).

2 positions are modified to phosphoserine; by host CK2: Ser-5 and Ser-8. The segment at 18–26 (IIKILYQSN) is homomultimerization. A Nuclear localization signal and RNA-binding (RRE) motif is present at residues 34–50 (TRQARRNRRRRWRARQR). The short motif at 73–84 (LQLPPLERLTLN) is the Nuclear export signal and binding to XPO1 element. The disordered stretch occupies residues 87–116 (EDCGTSGEKGEGSPQISLESSTILGTGTKE). 2 positions are modified to phosphoserine; by host: Ser-92 and Ser-99. A compositionally biased stretch (polar residues) spans 100–116 (PQISLESSTILGTGTKE).

This sequence belongs to the HIV-1 REV protein family. As to quaternary structure, homomultimer; when bound to the RRE. Multimeric assembly is essential for activity and may involve XPO1. Binds to human KPNB1, XPO1, TNPO1, RANBP5 and IPO7. Interacts with the viral Integrase. Interacts with human KHDRBS1. Interacts with human NAP1; this interaction decreases Rev multimerization and stimulates its activity. Interacts with human DEAD-box helicases DDX3 and DDX24; these interactions may serve for viral RNA export to the cytoplasm and packaging, respectively. Interacts with human PSIP1; this interaction may inhibit HIV-1 DNA integration by promoting dissociation of the Integrase-LEDGF/p75 complex. Post-translationally, asymmetrically arginine dimethylated at one site by host PRMT6. Methylation impairs the RNA-binding activity and export of viral RNA from the nucleus to the cytoplasm. In terms of processing, phosphorylated by protein kinase CK2. Presence of, and maybe binding to the N-terminus of the regulatory beta subunit of CK2 is necessary for CK2-mediated Rev's phosphorylation.

It localises to the host nucleus. Its subcellular location is the host nucleolus. The protein resides in the host cytoplasm. Escorts unspliced or incompletely spliced viral pre-mRNAs (late transcripts) out of the nucleus of infected cells. These pre-mRNAs carry a recognition sequence called Rev responsive element (RRE) located in the env gene, that is not present in fully spliced viral mRNAs (early transcripts). This function is essential since most viral proteins are translated from unspliced or partially spliced pre-mRNAs which cannot exit the nucleus by the pathway used by fully processed cellular mRNAs. Rev itself is translated from a fully spliced mRNA that readily exits the nucleus. Rev's nuclear localization signal (NLS) binds directly to KPNB1/Importin beta-1 without previous binding to KPNA1/Importin alpha-1. KPNB1 binds to the GDP bound form of RAN (Ran-GDP) and targets Rev to the nucleus. In the nucleus, the conversion from Ran-GDP to Ran-GTP dissociates Rev from KPNB1 and allows Rev's binding to the RRE in viral pre-mRNAs. Rev multimerization on the RRE via cooperative assembly exposes its nuclear export signal (NES) to the surface. Rev can then form a complex with XPO1/CRM1 and Ran-GTP, leading to nuclear export of the complex. Conversion from Ran-GTP to Ran-GDP mediates dissociation of the Rev/RRE/XPO1/RAN complex, so that Rev can return to the nucleus for a subsequent round of export. Beside KPNB1, also seems to interact with TNPO1/Transportin-1, RANBP5/IPO5 and IPO7/RANBP7 for nuclear import. The nucleoporin-like HRB/RIP is an essential cofactor that probably indirectly interacts with Rev to release HIV RNAs from the perinuclear region to the cytoplasm. This is Protein Rev from Human immunodeficiency virus type 1 group M subtype H (isolate 90CF056) (HIV-1).